We begin with the raw amino-acid sequence, 289 residues long: Diaminopimelate epimerase (289 aa).

Residues Asn-11 and Asn-78 each contribute to the substrate site. Cys-87 serves as the catalytic Proton donor. Substrate is bound by residues 88–89, Asn-163, Asn-199, and 217–218; these read GN and ER. The active-site Proton acceptor is the Cys-226. 227 to 228 contributes to the substrate binding site; it reads GT.

Belongs to the diaminopimelate epimerase family. In terms of assembly, homodimer.

It is found in the cytoplasm. It carries out the reaction (2S,6S)-2,6-diaminopimelate = meso-2,6-diaminopimelate. It participates in amino-acid biosynthesis; L-lysine biosynthesis via DAP pathway; DL-2,6-diaminopimelate from LL-2,6-diaminopimelate: step 1/1. Functionally, catalyzes the stereoinversion of LL-2,6-diaminopimelate (L,L-DAP) to meso-diaminopimelate (meso-DAP), a precursor of L-lysine and an essential component of the bacterial peptidoglycan. The polypeptide is Diaminopimelate epimerase (Mycolicibacterium gilvum (strain PYR-GCK) (Mycobacterium gilvum (strain PYR-GCK))).